The primary structure comprises 504 residues: Pentatricopeptide repeat-containing protein At5g16640, mitochondrial (504 aa).

The N-terminal 43 residues, Met1–Tyr43, are a transit peptide targeting the mitochondrion. PPR repeat units follow at residues Asn45–Pro79, Ser80–His114, Asn115–Pro149, Ser150–Pro184, Asn185–Pro219, Asp220–Pro254, Asp255–Pro289, Asp290–Pro324, Asp325–Arg359, Asn360–Pro394, Asn395–Ala429, Asp430–Pro464, and Asp465–Pro499.

Belongs to the PPR family. P subfamily.

It localises to the mitochondrion. In Arabidopsis thaliana (Mouse-ear cress), this protein is Pentatricopeptide repeat-containing protein At5g16640, mitochondrial.